Here is a 118-residue protein sequence, read N- to C-terminus: Eukaryotic translation initiation factor 4E-binding protein 1 (118 aa).

Composition is skewed to polar residues over residues 1–12 and 34–48; these read MSGGSSCSQTPS and YSTT…TTPG. Disordered regions lie at residues 1–20 and 25–48; these read MSGG…ATRR and DGVQ…TTPG. The residue at position 2 (Ser2) is an N-acetylserine. Phosphothreonine; by MTOR is present on Thr37. Thr41 carries the post-translational modification Phosphothreonine. Phosphoserine is present on Ser44. Thr46 is subject to Phosphothreonine; by MTOR. Residue Thr50 is modified to Phosphothreonine. Tyr54 is modified (phosphotyrosine). Positions 54–60 match the YXXXXLphi motif motif; the sequence is YDRKFLM. Lys57 is covalently cross-linked (Glycyl lysine isopeptide (Lys-Gly) (interchain with G-Cter in ubiquitin)). The segment at 64-118 is disordered; that stretch reads NSPVTKTPPRDLPTIPGVTSPSSDEPPMEASQSHLRNSPEDKRAGGEESQFEMDI. The residue at position 65 (Ser65) is a Phosphoserine; by DYRK2, MAPK1, MAPK3 and MTOR. Position 70 is a phosphothreonine; by MTOR (Thr70). Thr77 is modified (phosphothreonine). Residues Ser83 and Ser96 each carry the phosphoserine modification. Basic and acidic residues predominate over residues 100–109; that stretch reads NSPEDKRAGG. The residue at position 101 (Ser101) is a Phosphoserine; by DYRK2. Ser112 is modified (phosphoserine). The TOS motif signature appears at 114–118; the sequence is FEMDI.

It belongs to the eIF4E-binding protein family. In terms of assembly, hypophosphorylated EIF4EBP1 competes with EIF4G1/EIF4G3 to interact with EIF4E; insulin stimulated MAP-kinase (MAPK1 and MAPK3) or mTORC1 phosphorylation of EIF4EBP1 causes dissociation of the complex allowing EIF4G1/EIF4G3 to bind and consequent initiation of translation. Interacts (via TOS motif) with RPTOR; promoting phosphorylation by mTORC1. Post-translationally, phosphorylated on serine and threonine residues in response to insulin, EGF and PDGF. Phosphorylation at Thr-37, Thr-46, Ser-65 and Thr-70, corresponding to the hyperphosphorylated form, is regulated by mTORC1 and abolishes binding to EIF4E. In terms of processing, ubiquitinated: when eIF4E levels are low, hypophosphorylated form is ubiquitinated by the BCR(KLHL25) complex, leading to its degradation and serving as a homeostatic mechanism to maintain translation and prevent eIF4E inhibition when eIF4E levels are low. Not ubiquitinated when hyperphosphorylated (at Thr-37, Thr-46, Ser-65 and Thr-70) or associated with eIF4E.

It localises to the cytoplasm. Its subcellular location is the nucleus. Repressor of translation initiation that regulates EIF4E activity by preventing its assembly into the eIF4F complex: hypophosphorylated form competes with EIF4G1/EIF4G3 and strongly binds to EIF4E, leading to repress translation. In contrast, hyperphosphorylated form dissociates from EIF4E, allowing interaction between EIF4G1/EIF4G3 and EIF4E, leading to initiation of translation. Mediates the regulation of protein translation by hormones, growth factors and other stimuli that signal through the MAP kinase and mTORC1 pathways. This chain is Eukaryotic translation initiation factor 4E-binding protein 1 (EIF4EBP1), found in Homo sapiens (Human).